The primary structure comprises 370 residues: Putative L-lysine 2,3-aminomutase aq_454 (370 aa).

Residues His107–Pro322 form the Radical SAM core domain. Positions 121, 125, and 128 each coordinate [4Fe-4S] cluster. Lys334 carries the post-translational modification N6-(pyridoxal phosphate)lysine.

Belongs to the radical SAM superfamily. KamA family. Requires [4Fe-4S] cluster as cofactor. It depends on pyridoxal 5'-phosphate as a cofactor.

This Aquifex aeolicus (strain VF5) protein is Putative L-lysine 2,3-aminomutase aq_454.